Reading from the N-terminus, the 441-residue chain is uncharacterized protein (441 aa).

11 helical membrane passes run 62 to 82 (FLSL…FEIG), 88 to 108 (LILT…KLFG), 112 to 132 (IALT…IIAL), 154 to 174 (ALLH…LLVV), 192 to 212 (WMFF…YLLY), 224 to 244 (ALMI…GVAS), 247 to 267 (ANLS…YMVC), 312 to 332 (IVLF…ATFA), 335 to 355 (ISVM…IIFL), 363 to 383 (QGMW…NLLL), and 399 to 419 (ILCS…LLYA).

The protein resides in the membrane. This is an uncharacterized protein from Schizosaccharomyces pombe (strain 972 / ATCC 24843) (Fission yeast).